The following is a 182-amino-acid chain: Translation initiation factor IF-3 (182 aa).

It belongs to the IF-3 family. In terms of assembly, monomer.

It is found in the cytoplasm. IF-3 binds to the 30S ribosomal subunit and shifts the equilibrium between 70S ribosomes and their 50S and 30S subunits in favor of the free subunits, thus enhancing the availability of 30S subunits on which protein synthesis initiation begins. The chain is Translation initiation factor IF-3 from Thermosynechococcus vestitus (strain NIES-2133 / IAM M-273 / BP-1).